The sequence spans 278 residues: UPF0276 protein Swit_4400 (278 aa).

It belongs to the UPF0276 family.

The sequence is that of UPF0276 protein Swit_4400 from Rhizorhabdus wittichii (strain DSM 6014 / CCUG 31198 / JCM 15750 / NBRC 105917 / EY 4224 / RW1) (Sphingomonas wittichii).